The following is an 877-amino-acid chain: Alanine--tRNA ligase (877 aa).

Zn(2+)-binding residues include H565, H569, C667, and H671.

The protein belongs to the class-II aminoacyl-tRNA synthetase family. Zn(2+) is required as a cofactor.

The protein resides in the cytoplasm. It carries out the reaction tRNA(Ala) + L-alanine + ATP = L-alanyl-tRNA(Ala) + AMP + diphosphate. Functionally, catalyzes the attachment of alanine to tRNA(Ala) in a two-step reaction: alanine is first activated by ATP to form Ala-AMP and then transferred to the acceptor end of tRNA(Ala). Also edits incorrectly charged Ser-tRNA(Ala) and Gly-tRNA(Ala) via its editing domain. The polypeptide is Alanine--tRNA ligase (Chromobacterium violaceum (strain ATCC 12472 / DSM 30191 / JCM 1249 / CCUG 213 / NBRC 12614 / NCIMB 9131 / NCTC 9757 / MK)).